Here is an 801-residue protein sequence, read N- to C-terminus: Phenylalanine--tRNA ligase beta subunit (801 aa).

In terms of domain architecture, tRNA-binding spans Ala-39 to Phe-153. Residues Thr-406–Thr-481 enclose the B5 domain. Mg(2+)-binding residues include Asp-459, Asp-465, Glu-468, and Glu-469. In terms of domain architecture, FDX-ACB spans Thr-708–Arg-801.

The protein belongs to the phenylalanyl-tRNA synthetase beta subunit family. Type 1 subfamily. As to quaternary structure, tetramer of two alpha and two beta subunits. The cofactor is Mg(2+).

Its subcellular location is the cytoplasm. The catalysed reaction is tRNA(Phe) + L-phenylalanine + ATP = L-phenylalanyl-tRNA(Phe) + AMP + diphosphate + H(+). In Streptococcus agalactiae serotype V (strain ATCC BAA-611 / 2603 V/R), this protein is Phenylalanine--tRNA ligase beta subunit.